Consider the following 153-residue polypeptide: Vasotocin-neurophysin VT 1 (153 aa).

The N-terminal stretch at 1–20 is a signal peptide; sequence MPYSTFPLLWVLGLLALSSA. Cys-21 and Cys-26 are oxidised to a cystine. Gly-29 carries the post-translational modification Glycine amide. 7 cysteine pairs are disulfide-bonded: Cys-41-Cys-85, Cys-44-Cys-58, Cys-52-Cys-75, Cys-59-Cys-65, Cys-92-Cys-104, Cys-98-Cys-116, and Cys-105-Cys-110.

It belongs to the vasopressin/oxytocin family. Seven disulfide bonds are present in neurophysin.

It localises to the secreted. In terms of biological role, vasotocin is an antidiuretic hormone. The sequence is that of Vasotocin-neurophysin VT 1 from Oncorhynchus keta (Chum salmon).